Reading from the N-terminus, the 602-residue chain is Trichothecene efflux pump TRI12 (602 aa).

Helical transmembrane passes span 49–69, 77–97, 107–127, and 134–154; these read LTLL…SFII, NVSL…LLMG, GFIL…LYSF, and IGAQ…ILFI. The N-linked (GlcNAc...) asparagine glycan is linked to Asn160. Transmembrane regions (helical) follow at residues 164–184, 196–216, 240–260, 271–291, 297–317, 355–375, 380–400, 408–428, 450–470, 484–504, and 532–552; these read FLGN…GPYI, WIFY…FIFY, WIGA…VSWG, ILGL…YECY, PIIP…MLLI, STAG…FHIF, WQLI…ASVN, IAFS…TMLL, AICG…KFPG, WGFP…LTGQ, and AAAY…AIIA. An N-linked (GlcNAc...) asparagine glycan is attached at Asn590.

The protein belongs to the major facilitator superfamily.

The protein localises to the cell membrane. Functionally, efflux pump that provides the dual role of trichothecene export and self-protection by allowing the fungus to evade the harmful effect of its own trichothecene production. This chain is Trichothecene efflux pump TRI12, found in Trichoderma arundinaceum.